Consider the following 280-residue polypeptide: Putative pyruvate, phosphate dikinase regulatory protein (280 aa).

149 to 156 contacts ADP; sequence GVSRSSKT.

Belongs to the pyruvate, phosphate/water dikinase regulatory protein family. PDRP subfamily.

It catalyses the reaction N(tele)-phospho-L-histidyl/L-threonyl-[pyruvate, phosphate dikinase] + ADP = N(tele)-phospho-L-histidyl/O-phospho-L-threonyl-[pyruvate, phosphate dikinase] + AMP + H(+). The enzyme catalyses N(tele)-phospho-L-histidyl/O-phospho-L-threonyl-[pyruvate, phosphate dikinase] + phosphate + H(+) = N(tele)-phospho-L-histidyl/L-threonyl-[pyruvate, phosphate dikinase] + diphosphate. Functionally, bifunctional serine/threonine kinase and phosphorylase involved in the regulation of the pyruvate, phosphate dikinase (PPDK) by catalyzing its phosphorylation/dephosphorylation. This chain is Putative pyruvate, phosphate dikinase regulatory protein, found in Novosphingobium aromaticivorans (strain ATCC 700278 / DSM 12444 / CCUG 56034 / CIP 105152 / NBRC 16084 / F199).